We begin with the raw amino-acid sequence, 312 residues long: tRNA-cytidine(32) 2-sulfurtransferase (312 aa).

A PP-loop motif motif is present at residues 48-53; that stretch reads SGGKDS. The [4Fe-4S] cluster site is built by C123, C126, and C214.

It belongs to the TtcA family. Homodimer. It depends on Mg(2+) as a cofactor. [4Fe-4S] cluster is required as a cofactor.

It localises to the cytoplasm. It catalyses the reaction cytidine(32) in tRNA + S-sulfanyl-L-cysteinyl-[cysteine desulfurase] + AH2 + ATP = 2-thiocytidine(32) in tRNA + L-cysteinyl-[cysteine desulfurase] + A + AMP + diphosphate + H(+). It participates in tRNA modification. Functionally, catalyzes the ATP-dependent 2-thiolation of cytidine in position 32 of tRNA, to form 2-thiocytidine (s(2)C32). The sulfur atoms are provided by the cysteine/cysteine desulfurase (IscS) system. This Mannheimia succiniciproducens (strain KCTC 0769BP / MBEL55E) protein is tRNA-cytidine(32) 2-sulfurtransferase.